The sequence spans 354 residues: MRYLLIVITFFMGFSSLPAWAMDCYAEHEGGNTVVIGYVPRISIPSDGKKGDKIWQSSEYFMNVFCNNALPGPSPGEEYPSAWANIMMLLASGQDFYNQNSYTFGVTYNGVDYDSTSPLPIAAPVCIDIKGAGTFGNGYKKPAVCSGGPEPQLSVTFPVRVQLYIKLAKNANKVNKKLVLPDEYIALEFKGMSGAGAIEVDKNLTFRIRGLNNIHVLDCFVNVDLEPADGVVDFGKINSRTIKNTSVSETFSVVMTKDPGAACTEQFNILGSFFTTDILSDYSHLDIGNGLLLKIFHNDGTATEFNRFSQFASFSSSSAPSVTAPFRAELSANPAETVVEGPFSKDVILKITYN.

Positions 1–21 are cleaved as a signal peptide; it reads MRYLLIVITFFMGFSSLPAWA.

The protein to E.coli YbgO.

May be involved in a fimbrial system chaperoned by YqiH and exported by YqiG. This is an uncharacterized protein from Escherichia coli (strain K12).